We begin with the raw amino-acid sequence, 288 residues long: Pyridoxal kinase PdxY (288 aa).

Residues serine 12 and 47 to 48 contribute to the substrate site; that span reads TQ. Residues aspartate 114, glutamate 151, lysine 184, and 211–214 contribute to the ATP site; that span reads RPLL. Residue aspartate 225 coordinates substrate.

It belongs to the pyridoxine kinase family. PdxY subfamily. As to quaternary structure, homodimer. The cofactor is Mg(2+).

It catalyses the reaction pyridoxal + ATP = pyridoxal 5'-phosphate + ADP + H(+). Its pathway is cofactor metabolism; pyridoxal 5'-phosphate salvage; pyridoxal 5'-phosphate from pyridoxal: step 1/1. Its function is as follows. Pyridoxal kinase involved in the salvage pathway of pyridoxal 5'-phosphate (PLP). Catalyzes the phosphorylation of pyridoxal to PLP. This Pseudomonas syringae pv. tomato (strain ATCC BAA-871 / DC3000) protein is Pyridoxal kinase PdxY.